We begin with the raw amino-acid sequence, 159 residues long: MKNTQRQLSSSFMKFLEEKNRDLEAVFAYMDANRDGRISAEELKKSFKTLGEQMSDEEAEAAVKLSDIDGDGMLDINEFALLIKGNDEFTEEEKKRKIMEAFRMYIADGEDCITPGSLKMMLMKLGESRTTDDCKVMIQAFDLNADGVLSFDEFALMMR.

EF-hand domains lie at 18–53 (EKNRDLEAVFAYMDANRDGRISAEELKKSFKTLGEQ), 54–89 (MSDEEAEAAVKLSDIDGDGMLDINEFALLIKGNDEF), 93–128 (EKKRKIMEAFRMYIADGEDCITPGSLKMMLMKLGES), and 129–159 (RTTDDCKVMIQAFDLNADGVLSFDEFALMMR). 10 residues coordinate Ca(2+): aspartate 31, asparagine 33, aspartate 35, arginine 37, glutamate 42, aspartate 67, aspartate 69, aspartate 71, methionine 73, and glutamate 78. Aspartate 142, asparagine 144, aspartate 146, and glutamate 153 together coordinate Ca(2+).

Expressed in the zones of elongation and differentiation in seedling roots and at the root-hypocotyl junction. Expressed from stage 12 of flower development in anthers, specifically in pollen.

In terms of biological role, potential calcium sensor that binds calcium in vitro. This Arabidopsis thaliana (Mouse-ear cress) protein is Calcium-binding protein CML39 (CML39).